Here is a 390-residue protein sequence, read N- to C-terminus: Homoserine O-succinyltransferase (390 aa).

Positions N56 to L365 constitute an AB hydrolase-1 domain. The active-site Nucleophile is the S162. Residue R232 coordinates substrate. Catalysis depends on residues D327 and H360. D361 provides a ligand contact to substrate.

It belongs to the AB hydrolase superfamily. MetX family. As to quaternary structure, homodimer.

The protein localises to the cytoplasm. The enzyme catalyses L-homoserine + succinyl-CoA = O-succinyl-L-homoserine + CoA. The protein operates within amino-acid biosynthesis; L-methionine biosynthesis via de novo pathway; O-succinyl-L-homoserine from L-homoserine: step 1/1. Functionally, transfers a succinyl group from succinyl-CoA to L-homoserine, forming succinyl-L-homoserine. In vitro, also has serine succinyl transferase activity. This chain is Homoserine O-succinyltransferase, found in Litchfieldella anticariensis (strain DSM 16096 / CECT 5854 / CIP 108499 / LMG 22089 / FP35) (Halomonas anticariensis).